The sequence spans 319 residues: tRNA U34 carboxymethyltransferase (319 aa).

Residues Lys-88, Trp-102, Lys-107, Gly-126, 176–177 (LE), Met-192, Tyr-196, and Arg-311 contribute to the carboxy-S-adenosyl-L-methionine site.

This sequence belongs to the class I-like SAM-binding methyltransferase superfamily. CmoB family. Homotetramer.

It carries out the reaction carboxy-S-adenosyl-L-methionine + 5-hydroxyuridine(34) in tRNA = 5-carboxymethoxyuridine(34) in tRNA + S-adenosyl-L-homocysteine + H(+). Functionally, catalyzes carboxymethyl transfer from carboxy-S-adenosyl-L-methionine (Cx-SAM) to 5-hydroxyuridine (ho5U) to form 5-carboxymethoxyuridine (cmo5U) at position 34 in tRNAs. The protein is tRNA U34 carboxymethyltransferase of Pseudomonas savastanoi pv. phaseolicola (strain 1448A / Race 6) (Pseudomonas syringae pv. phaseolicola (strain 1448A / Race 6)).